The chain runs to 77 residues: Translational regulator CsrA (77 aa).

Residues 58–77 (ANRRTAEETLDQASRLLSQK) form a disordered region. The segment covering 68-77 (DQASRLLSQK) has biased composition (polar residues).

Belongs to the CsrA/RsmA family. Homodimer; the beta-strands of each monomer intercalate to form a hydrophobic core, while the alpha-helices form wings that extend away from the core.

It is found in the cytoplasm. Functionally, a translational regulator that binds mRNA to regulate translation initiation and/or mRNA stability. Usually binds in the 5'-UTR at or near the Shine-Dalgarno sequence preventing ribosome-binding, thus repressing translation. Its main target seems to be the major flagellin gene, while its function is anatagonized by FliW. The protein is Translational regulator CsrA of Magnetococcus marinus (strain ATCC BAA-1437 / JCM 17883 / MC-1).